We begin with the raw amino-acid sequence, 301 residues long: Methionyl-tRNA formyltransferase (301 aa).

109–112 (SLLP) is a binding site for (6S)-5,6,7,8-tetrahydrofolate.

It belongs to the Fmt family.

It carries out the reaction L-methionyl-tRNA(fMet) + (6R)-10-formyltetrahydrofolate = N-formyl-L-methionyl-tRNA(fMet) + (6S)-5,6,7,8-tetrahydrofolate + H(+). Its function is as follows. Attaches a formyl group to the free amino group of methionyl-tRNA(fMet). The formyl group appears to play a dual role in the initiator identity of N-formylmethionyl-tRNA by promoting its recognition by IF2 and preventing the misappropriation of this tRNA by the elongation apparatus. The sequence is that of Methionyl-tRNA formyltransferase from Jannaschia sp. (strain CCS1).